A 255-amino-acid chain; its full sequence is 3-hydroxyacyl-CoA dehydrogenase type-2 (255 aa).

6 residues coordinate NAD(+): Ser-14, Leu-16, Asp-35, Asp-58, Val-59, and Cys-85. Ser-149 lines the substrate pocket. NAD(+) contacts are provided by Tyr-162, Lys-166, Phe-195, and Thr-197. Residue Tyr-162 is the Proton acceptor of the active site.

Belongs to the short-chain dehydrogenases/reductases (SDR) family. Component of mitochondrial ribonuclease P, a complex composed of rswl/MRPP1, scu/MRPP2 and mldr/MRPP3. In terms of tissue distribution, found in many tissues including CNS, imaginal disks and salivary glands. Highest expression in both embryonic gonadal primordia and mature ovaries and testes.

Its subcellular location is the mitochondrion. It catalyses the reaction a (3S)-3-hydroxyacyl-CoA + NAD(+) = a 3-oxoacyl-CoA + NADH + H(+). The enzyme catalyses (3S)-3-hydroxybutanoyl-CoA + NAD(+) = acetoacetyl-CoA + NADH + H(+). It carries out the reaction testosterone + NAD(+) = androst-4-ene-3,17-dione + NADH + H(+). The catalysed reaction is 5alpha-androstane-3alpha,17beta-diol + NAD(+) = 17beta-hydroxy-5alpha-androstan-3-one + NADH + H(+). It catalyses the reaction 17beta-estradiol + NAD(+) = estrone + NADH + H(+). The enzyme catalyses ursodeoxycholate + NAD(+) = 7-oxolithocholate + NADH + H(+). It carries out the reaction 3beta,7beta-dihydroxy-5beta-cholan-24-oate + NAD(+) = 3beta-hydroxy-7-oxo-5beta-cholan-24-oate + NADH + H(+). The catalysed reaction is 11-dehydrocorticosterone + NAD(+) = pregn-4-ene-3,11,20,21-tetraone + NADH + H(+). It catalyses the reaction cortisone + NAD(+) = 17alpha-hydroxypregn-4-en-3,11,20-trione-21-al + NADH + H(+). The enzyme catalyses cortisol + NAD(+) = 11beta,17alpha-dihydroxypregn-4-ene-3,20,21-trione + NADH + H(+). It carries out the reaction 5alpha-pregnan-20beta-ol-3-one + NAD(+) = 5alpha-pregnane-3,20-dione + NADH + H(+). The catalysed reaction is 17beta-hydroxy-5alpha-androstan-3-one + NAD(+) = 5alpha-androstan-3,17-dione + NADH + H(+). Its function is as follows. Mitochondrial dehydrogenase involved in pathways of fatty acid, and steroid metabolism. Versatile enzyme presenting two types of activity; L-3-hydroxyacyl-CoA dehydrogenase ((3S)-3-hydroxyacyl-CoA dehydrogenase) activity and hydroxysteroid dehydrogenase (HSD) activity with a wide substrate spectrum. As a (3S)-3-hydroxyacyl-CoA dehydrogenase, it functions in the third step of the fatty acid beta-oxidation pathway, a major metabolic process in which fatty acids are oxidized to provide a significant source of energy, while also generating acyl-CoA metabolites used by many metabolic routes. As a HSD, it functions in the degradation pathways of glucocorticoids and sex steroids and epimerization of bile acids; catalyzes the beta-oxidation at position 17 of androgens and estrogens, has 3-alpha-hydroxysteroid dehydrogenase activity with androsterone, and carries out oxidative conversions of 7-beta-hydroxylated bile acids like ursodeoxycholate or isoursodeoxycholate (also known as 3-beta,7-beta-dihydroxy-5-beta-cholan-24-oate or 7-beta-hydroxyisolithocholate, respectively). Also exhibits 20-beta-OH and 21-OH dehydrogenase activities with C21 steroids. Essential for structural and functional integrity of mitochondria. Required for cell survival during embryonic development. May play a role in germline formation. In terms of biological role, in addition to mitochondrial dehydrogenase activity, moonlights as a component of mitochondrial ribonuclease P, a complex that cleaves tRNA molecules in their 5'-ends. Essential for the structural and functional integrity of mitochondria. Function is essential for pupal development. The protein is 3-hydroxyacyl-CoA dehydrogenase type-2 of Drosophila melanogaster (Fruit fly).